Consider the following 370-residue polypeptide: Putative alanine racemase 2 (370 aa).

Lys38 serves as the catalytic Proton acceptor; specific for D-alanine. At Lys38 the chain carries N6-(pyridoxal phosphate)lysine. Tyr266 acts as the Proton acceptor; specific for L-alanine in catalysis.

The protein belongs to the alanine racemase family. Requires pyridoxal 5'-phosphate as cofactor.

It carries out the reaction L-alanine = D-alanine. The chain is Putative alanine racemase 2 (alr2) from Schizosaccharomyces pombe (strain 972 / ATCC 24843) (Fission yeast).